The following is a 306-amino-acid chain: Oligopeptide transport system permease protein OppB (306 aa).

Residues 1–8 (MLKFIFKR) lie on the Cytoplasmic side of the membrane. Residues 9–29 (LLEALPTLFILITFSFFLMRL) traverse the membrane as a helical segment. The Periplasmic portion of the chain corresponds to 30-99 (APGSPFTSER…IASAFPVSIK (70 aa)). Positions 94–293 (FPVSIKLGMV…TLTILFNAIV (200 aa)) constitute an ABC transmembrane type-1 domain. A helical membrane pass occupies residues 100-120 (LGMVAFAFAVVLGVTAGTLAA). The Cytoplasmic segment spans residues 121 to 135 (LNQNSRWDYILMSFS). A helical transmembrane segment spans residues 136–156 (MLGVIMPSFVFAPVLVLIFAI). Residues 157–169 (YLGWLPAGGWNGG) lie on the Periplasmic side of the membrane. A helical membrane pass occupies residues 170 to 190 (TAMYMILPVASLTIAYVAGIA). Residues 191–229 (RIMRGSMIEVLHSNFIRTAKAKGLSMSRIILKHALRPAL) lie on the Cytoplasmic side of the membrane. The helical transmembrane segment at 230–250 (LPVITYLGPAFVGIITGSMVI) threads the bilayer. The Periplasmic segment spans residues 251–279 (ESVFGLPGMGLLFVNGALNRDYSLVLSLT). The helical transmembrane segment at 280–300 (ILVGTLTILFNAIVDILYAII) threads the bilayer. The Cytoplasmic portion of the chain corresponds to 301 to 306 (DPKIRY).

It belongs to the binding-protein-dependent transport system permease family. OppBC subfamily. As to quaternary structure, the complex is composed of two ATP-binding proteins (OppD and OppF), two transmembrane proteins (OppB and OppC) and a solute-binding protein (OppA).

Its subcellular location is the cell inner membrane. Its function is as follows. Part of the ABC transporter complex OppABCDF involved in the uptake of oligopeptides. Probably responsible for the translocation of the substrate across the membrane. This Haemophilus influenzae (strain ATCC 51907 / DSM 11121 / KW20 / Rd) protein is Oligopeptide transport system permease protein OppB (oppB).